The chain runs to 1918 residues: NFX1-type zinc finger-containing protein 1 (1918 aa).

Positions 1-12 (MEERRPHLDARP) are enriched in basic and acidic residues. Disordered regions lie at residues 1 to 58 (MEER…RANN) and 75 to 140 (RNPH…QPQQ). Residues 30–42 (RARNQANNPPANA) show a composition bias toward low complexity. A compositionally biased stretch (basic and acidic residues) spans 82-105 (RNQEGHASDEARDQRHDQENDTRW). Polar residues predominate over residues 120-129 (SNDNFQQWRT). The stretch at 286-313 (DIEEETEKNLEKVQTIIEHLQEKRREGT) forms a coiled coil. Disordered stretches follow at residues 796–819 (SVSP…GEEE) and 876–896 (TAAG…QKKK). The segment covering 809 to 819 (EGDEEEEGEEE) has biased composition (acidic residues). Residues 877–887 (AAGQEQATGEW) are compositionally biased toward polar residues. Residues 886–967 (EWQTQRNQKK…TSAERMAELR (82 aa)) are a coiled coil. NF-X1-type zinc fingers lie at residues 1298 to 1320 (CGHV…QCMK), 1330 to 1346 (GHRC…PCQV), 1382 to 1400 (CGHR…LCSE), 1441 to 1463 (CGHP…RCQQ), 1471 to 1488 (CSHK…PCQR), and 1546 to 1564 (CGHP…KCRI). Residues 1741 to 1820 (LAKKRLSFTS…EKMEALKATL (80 aa)) are a coiled coil. The RZ-type zinc-finger motif lies at 1827–1898 (ISEEERVQIV…LASEMDGAQH (72 aa)). Cys-1849, His-1853, Cys-1869, and Cys-1872 together coordinate Zn(2+).

Belongs to the ZNFX1 family. Interacts with MAVS. In terms of tissue distribution, widely expressed.

It is found in the mitochondrion outer membrane. Its subcellular location is the cytoplasm. It localises to the stress granule. In terms of biological role, RNA-binding protein that initiates the antiviral response and is required to restrict the replication of RNA viruses. Acts as a double-stranded RNA (dsRNA) sensor that recognizes viral RNA and then interacts with MAVS to initiate the type I interferon response. Also required for immunity against some bacteria, such as mycobacteria. This chain is NFX1-type zinc finger-containing protein 1, found in Homo sapiens (Human).